We begin with the raw amino-acid sequence, 54 residues long: Large ribosomal subunit protein bL33B (54 aa).

This sequence belongs to the bacterial ribosomal protein bL33 family.

The protein is Large ribosomal subunit protein bL33B of Mycobacterium sp. (strain JLS).